Consider the following 182-residue polypeptide: Constitutive photomorphogenesis protein 10 (182 aa).

The UBC core domain occupies 36 to 182 (ASGKRIQREM…AKEWTLRFAK (147 aa)).

It belongs to the ubiquitin-conjugating enzyme family. In terms of assembly, component of the CDD complex, at least composed of COP10, DET1 and DDB1A. Interacts with E3 ubiquitin ligase COP1. Interacts with E2 ubiquitin conjugating UBC5. Interacts with CSN3, CSN4 and CSN8 subunits of the COP9 complex. Expressed in flower, leaf, stem and seedling. Expressed at lower level in root.

It is found in the nucleus. Functionally, component of light signal transduction machinery. Involved in repression of photomorphogenesis in darkness by participating in the CDD complex, a complex probably required to regulate the activity of ubiquitin conjugating enzymes (E2s). Repression of photomorphogenesis is probably mediated by ubiquitination and subsequent degradation of photomorphogenesis-promoting factors such as HY5, HYH and LAF1. Although strongly related to ubiquitin-conjugating enzyme, it has no catalytic activity by itself due to the absence of the conserved Cys active site at position 120. It can however enhance the activity of E2 conjugating enzymes. The protein is Constitutive photomorphogenesis protein 10 (COP10) of Arabidopsis thaliana (Mouse-ear cress).